Consider the following 378-residue polypeptide: Inner membrane protein YibH (378 aa).

At methionine 1–leucine 3 the chain is on the periplasmic side. The chain crosses the membrane as a helical span at residues leucine 4–valine 24. Residues asparagine 25–glutamine 26 lie on the Cytoplasmic side of the membrane. Residues tryptophan 27–methionine 47 traverse the membrane as a helical segment. Over asparagine 48 to threonine 54 the chain is Periplasmic. The helical transmembrane segment at phenylalanine 55–threonine 75 threads the bilayer. At glutamate 76–glutamine 232 the chain is on the cytoplasmic side. Residues valine 233–isoleucine 253 form a helical membrane-spanning segment. Residues proline 254–valine 280 are Periplasmic-facing. A helical membrane pass occupies residues valine 281–valine 301. The Cytoplasmic portion of the chain corresponds to proline 302–glutamine 309. Residues glycine 310 to leucine 330 form a helical membrane-spanning segment. Residues aspartate 331–histidine 378 lie on the Periplasmic side of the membrane.

Belongs to the membrane fusion protein (MFP) (TC 8.A.1) family.

Its subcellular location is the cell inner membrane. The polypeptide is Inner membrane protein YibH (yibH) (Escherichia coli O157:H7).